The sequence spans 66 residues: ATP synthase subunit c (66 aa).

Transmembrane regions (helical) follow at residues 3-23 (LTFL…GLLM) and 45-65 (FLGV…SFII).

Belongs to the ATPase C chain family. In terms of assembly, F-type ATPases have 2 components, F(1) - the catalytic core - and F(0) - the membrane proton channel. F(1) has five subunits: alpha(3), beta(3), gamma(1), delta(1), epsilon(1). F(0) has three main subunits: a(1), b(2) and c(10-14). The alpha and beta chains form an alternating ring which encloses part of the gamma chain. F(1) is attached to F(0) by a central stalk formed by the gamma and epsilon chains, while a peripheral stalk is formed by the delta and b chains.

The protein localises to the cell membrane. F(1)F(0) ATP synthase produces ATP from ADP in the presence of a proton or sodium gradient. F-type ATPases consist of two structural domains, F(1) containing the extramembraneous catalytic core and F(0) containing the membrane proton channel, linked together by a central stalk and a peripheral stalk. During catalysis, ATP synthesis in the catalytic domain of F(1) is coupled via a rotary mechanism of the central stalk subunits to proton translocation. Its function is as follows. Key component of the F(0) channel; it plays a direct role in translocation across the membrane. A homomeric c-ring of between 10-14 subunits forms the central stalk rotor element with the F(1) delta and epsilon subunits. The polypeptide is ATP synthase subunit c (Streptococcus pneumoniae serotype 19F (strain G54)).